A 410-amino-acid chain; its full sequence is Homeobox protein Hox-A3a (410 aa).

The tract at residues Val79–His126 is disordered. The Antp-type hexapeptide signature appears at Ile127–Lys132. Positions Ser163–Gln222 form a DNA-binding region, homeobox. Positions Gln222–Gly249 are disordered.

This sequence belongs to the Antp homeobox family.

The protein resides in the nucleus. Its function is as follows. Sequence-specific transcription factor which is part of a developmental regulatory system that provides cells with specific positional identities on the anterior-posterior axis. This Danio rerio (Zebrafish) protein is Homeobox protein Hox-A3a (hoxa3a).